Here is a 155-residue protein sequence, read N- to C-terminus: 6,7-dimethyl-8-ribityllumazine synthase (155 aa).

5-amino-6-(D-ribitylamino)uracil contacts are provided by residues Phe-22, 57–59, and 81–83; these read AVE and TVI. 86–87 is a (2S)-2-hydroxy-3-oxobutyl phosphate binding site; it reads GT. His-89 acts as the Proton donor in catalysis. Phe-114 is a 5-amino-6-(D-ribitylamino)uracil binding site. Arg-128 serves as a coordination point for (2S)-2-hydroxy-3-oxobutyl phosphate.

Belongs to the DMRL synthase family. Forms an icosahedral capsid composed of 60 subunits, arranged as a dodecamer of pentamers.

The catalysed reaction is (2S)-2-hydroxy-3-oxobutyl phosphate + 5-amino-6-(D-ribitylamino)uracil = 6,7-dimethyl-8-(1-D-ribityl)lumazine + phosphate + 2 H2O + H(+). It functions in the pathway cofactor biosynthesis; riboflavin biosynthesis; riboflavin from 2-hydroxy-3-oxobutyl phosphate and 5-amino-6-(D-ribitylamino)uracil: step 1/2. Functionally, catalyzes the formation of 6,7-dimethyl-8-ribityllumazine by condensation of 5-amino-6-(D-ribitylamino)uracil with 3,4-dihydroxy-2-butanone 4-phosphate. This is the penultimate step in the biosynthesis of riboflavin. The polypeptide is 6,7-dimethyl-8-ribityllumazine synthase (Psychromonas ingrahamii (strain DSM 17664 / CCUG 51855 / 37)).